A 205-amino-acid polypeptide reads, in one-letter code: Rho-related GTP-binding protein RhoQ (205 aa).

Gly-16–Thr-23 is a binding site for GTP. The Effector region motif lies at Tyr-38–Tyr-46. GTP is bound by residues Asp-63–Gln-67 and Thr-121–Asp-124. Cys-202 carries the cysteine methyl ester modification. The S-farnesyl cysteine moiety is linked to residue Cys-202. The propeptide at Leu-203–Thr-205 is removed in mature form.

Belongs to the small GTPase superfamily. Rho family. As to quaternary structure, interacts with CDC42EP4 in a GTP-dependent manner. Interacts with ARHGAP33/TCGAP. Interacts with CDC42EP1, CDC42EP2, CDC42EP3, PARD6A, PARD6G (and probably PARD6B) in a GTP-dependent manner. Part of a quaternary complex containing PARD3, some PARD6 protein (PARD6A, PARD6B or PARD6G) and some atypical PKC protein (PRKCI or PRKCZ). Interacts with EXO70 in a GTP-dependent manner. Interacts with GOPC. May be post-translationally modified by both palmitoylation and polyisoprenylation.

The protein resides in the cytoplasm. It is found in the cell membrane. With respect to regulation, regulated by guanine nucleotide exchange factors (GEFs) which promote the exchange of bound GDP for free GTP, GTPase activating proteins (GAPs) which increase the GTP hydrolysis activity, and GDP dissociation inhibitors which inhibit the dissociation of the nucleotide from the GTPase. Plasma membrane-associated small GTPase which cycles between an active GTP-bound and an inactive GDP-bound state. In active state binds to a variety of effector proteins to regulate cellular responses. Involved in epithelial cell polarization processes. May play a role in CFTR trafficking to the plasma membrane. Causes the formation of thin, actin-rich surface projections called filopodia. The protein is Rho-related GTP-binding protein RhoQ (RHOQ) of Homo sapiens (Human).